Consider the following 508-residue polypeptide: Photosystem II CP47 reaction center protein (508 aa).

The next 6 helical transmembrane spans lie at 21 to 36 (SVHI…WAGS), 101 to 115 (IVFS…IWHW), 140 to 156 (GIHL…FGAF), 203 to 218 (IAAG…FHLS), 237 to 252 (VLSS…AFVV), and 457 to 472 (SFAL…HGSR).

The protein belongs to the PsbB/PsbC family. PsbB subfamily. In terms of assembly, PSII is composed of 1 copy each of membrane proteins PsbA, PsbB, PsbC, PsbD, PsbE, PsbF, PsbH, PsbI, PsbJ, PsbK, PsbL, PsbM, PsbT, PsbX, PsbY, PsbZ, Psb30/Ycf12, at least 3 peripheral proteins of the oxygen-evolving complex and a large number of cofactors. It forms dimeric complexes. Binds multiple chlorophylls. PSII binds additional chlorophylls, carotenoids and specific lipids. is required as a cofactor.

Its subcellular location is the plastid. The protein localises to the chloroplast thylakoid membrane. Functionally, one of the components of the core complex of photosystem II (PSII). It binds chlorophyll and helps catalyze the primary light-induced photochemical processes of PSII. PSII is a light-driven water:plastoquinone oxidoreductase, using light energy to abstract electrons from H(2)O, generating O(2) and a proton gradient subsequently used for ATP formation. The protein is Photosystem II CP47 reaction center protein of Helianthus annuus (Common sunflower).